The sequence spans 375 residues: Lipid-A-disaccharide synthase (375 aa).

It belongs to the LpxB family.

The enzyme catalyses a lipid X + a UDP-2-N,3-O-bis[(3R)-3-hydroxyacyl]-alpha-D-glucosamine = a lipid A disaccharide + UDP + H(+). It functions in the pathway bacterial outer membrane biogenesis; LPS lipid A biosynthesis. Its function is as follows. Condensation of UDP-2,3-diacylglucosamine and 2,3-diacylglucosamine-1-phosphate to form lipid A disaccharide, a precursor of lipid A, a phosphorylated glycolipid that anchors the lipopolysaccharide to the outer membrane of the cell. The sequence is that of Lipid-A-disaccharide synthase from Pseudomonas entomophila (strain L48).